Reading from the N-terminus, the 171-residue chain is NADH-quinone oxidoreductase subunit B (171 aa).

Positions 39, 40, 105, and 134 each coordinate [4Fe-4S] cluster.

Belongs to the complex I 20 kDa subunit family. As to quaternary structure, NDH-1 is composed of 14 different subunits. Subunits NuoB, C, D, E, F, and G constitute the peripheral sector of the complex. Requires [4Fe-4S] cluster as cofactor.

It localises to the cell inner membrane. It carries out the reaction a quinone + NADH + 5 H(+)(in) = a quinol + NAD(+) + 4 H(+)(out). Functionally, NDH-1 shuttles electrons from NADH, via FMN and iron-sulfur (Fe-S) centers, to quinones in the respiratory chain. The immediate electron acceptor for the enzyme in this species is believed to be ubiquinone. Couples the redox reaction to proton translocation (for every two electrons transferred, four hydrogen ions are translocated across the cytoplasmic membrane), and thus conserves the redox energy in a proton gradient. This chain is NADH-quinone oxidoreductase subunit B, found in Aliarcobacter butzleri (strain RM4018) (Arcobacter butzleri).